Here is a 224-residue protein sequence, read N- to C-terminus: Large ribosomal subunit protein bL25 (224 aa).

The segment at 190–224 (EPAPAAEGAAPAEGAAAAAAGGKPAAKTAKPAAKK) is disordered.

Belongs to the bacterial ribosomal protein bL25 family. CTC subfamily. Part of the 50S ribosomal subunit; part of the 5S rRNA/L5/L18/L25 subcomplex. Contacts the 5S rRNA. Binds to the 5S rRNA independently of L5 and L18.

Functionally, this is one of the proteins that binds to the 5S RNA in the ribosome where it forms part of the central protuberance. The protein is Large ribosomal subunit protein bL25 of Variovorax paradoxus (strain S110).